We begin with the raw amino-acid sequence, 210 residues long: Superoxide dismutase [Mn], mitochondrial (210 aa).

H30, H78, D166, and H170 together coordinate Mn(2+).

It belongs to the iron/manganese superoxide dismutase family. Homotetramer. The cofactor is Mn(2+). In terms of processing, the N-terminus is blocked.

The protein localises to the mitochondrion matrix. The enzyme catalyses 2 superoxide + 2 H(+) = H2O2 + O2. In terms of biological role, destroys superoxide anion radicals which are normally produced within the cells and which are toxic to biological systems. The chain is Superoxide dismutase [Mn], mitochondrial (SOD) from Penicillium chrysogenum (Penicillium notatum).